We begin with the raw amino-acid sequence, 85 residues long: Translation initiation factor IF-1 2 (85 aa).

One can recognise an S1-like domain in the interval 1–72 (MAKEELIEMQ…TKGRITFRHL (72 aa)).

This sequence belongs to the IF-1 family. As to quaternary structure, component of the 30S ribosomal translation pre-initiation complex which assembles on the 30S ribosome in the order IF-2 and IF-3, IF-1 and N-formylmethionyl-tRNA(fMet); mRNA recruitment can occur at any time during PIC assembly.

It localises to the cytoplasm. Functionally, one of the essential components for the initiation of protein synthesis. Stabilizes the binding of IF-2 and IF-3 on the 30S subunit to which N-formylmethionyl-tRNA(fMet) subsequently binds. Helps modulate mRNA selection, yielding the 30S pre-initiation complex (PIC). Upon addition of the 50S ribosomal subunit IF-1, IF-2 and IF-3 are released leaving the mature 70S translation initiation complex. The chain is Translation initiation factor IF-1 2 from Paracidovorax citrulli (strain AAC00-1) (Acidovorax citrulli).